We begin with the raw amino-acid sequence, 529 residues long: Probable anion transporter 1, chloroplastic (529 aa).

The transit peptide at 1-55 (MLYLLPLSVSCRVPGSPPAPRSRRFLDPGGGRGVGDGLGGVRVFRRRALRGTDVR) directs the protein to the chloroplast. Disordered stretches follow at residues 13 to 39 (VPGS…DGLG) and 52 to 78 (TDVR…GGYG). Over residues 28–39 (PGGGRGVGDGLG) the composition is skewed to gly residues. A compositionally biased stretch (basic and acidic residues) spans 67–76 (RHDDARHDGG). 11 helical membrane-spanning segments follow: residues 120–140 (WAIV…RVNM), 158–178 (VGLI…AGGI), 187–207 (TVLG…PFAA), 209–229 (LGLP…GVAM), 251–271 (LVYS…PLLI), 274–294 (FGWP…FSTW), 340–360 (VWAL…LLTW), 378–398 (LFCV…GWIA), 418–438 (IGFL…SPAM), 469–489 (AGVL…FGTA), and 503–523 (VFKV…LFST).

It belongs to the major facilitator superfamily. Sodium/anion cotransporter (TC 2.A.1.14) family.

Its subcellular location is the plastid. The protein resides in the chloroplast membrane. Its function is as follows. Probable anion transporter. The chain is Probable anion transporter 1, chloroplastic (PHT4;1) from Oryza sativa subsp. japonica (Rice).